The primary structure comprises 703 residues: MSEQKAFSLNVDEQNIAWLAIDVPNEKMNTLQAAFADEMKEIFAQLKDSSGIKGMIIHSLKPDNFVAGADVRMLEACTTANEAQALAKQGQELFQQLSDLPYPVVAAIHGPCLGGGLELALACDYRVCTDFDKTRLGLPEVQLGLLPGSGGTQRLPRLIGLLPSLDLILTGKQLRAKKAKKLGVVDACVPDTILLDVAKQFIDKGKNKGKKKQSTKEKLMSGSGLGRKLVFEQAAKKTNQKTRGNYPATVAILEVIQHGLEKGFAQGQELEAKRFGELVMSSESKALRSIFFATTEMKKEHGTDAQPAAVKKVGVLGGGLMGAGISHVTVAKAKVPVRIKDVSNDGVLNALNYNYKLFEKQRKRRILSKADLQAKMLQLSGGVDFTSYNHIDVVIEAVFEDLDLKQQMVADIEANAKSETIFATNTSSLPIHKIAEKAERPENIVGLHYFSPVEKMPLVEVIPHETTSDETISTVVALAKKQGKTPIVVKDKAGFYVNRILAPYMNEAAHILLANEPIEKLDGALLDFGFPVGPITLLDEVGVDIGAKIMPILVNELGERFKGPDVFDILLNDGRKGRKSGKGFYTYKGKKKEVDKSIYKLLKLTPESKLSDNDIALRCVLPMLNEAVRCLDDGIIRSPRDGDIGAIFGIGFPPFLGGPFRYMDQFGLKELVEKMNEFASKYGDRYAPCDGLLTRAGEGRTFY.

The interval 1–190 (MSEQKAFSLN…KLGVVDACVP (190 aa)) is enoyl-CoA hydratase. Residues 308 to 703 (AAVKKVGVLG…TRAGEGRTFY (396 aa)) are 3-hydroxyacyl-CoA dehydrogenase.

This sequence in the N-terminal section; belongs to the enoyl-CoA hydratase/isomerase family. The protein in the central section; belongs to the 3-hydroxyacyl-CoA dehydrogenase family. In terms of assembly, heterotetramer of two alpha chains (FadJ) and two beta chains (FadI).

The protein localises to the cytoplasm. It catalyses the reaction a (3S)-3-hydroxyacyl-CoA = a (2E)-enoyl-CoA + H2O. The enzyme catalyses a 4-saturated-(3S)-3-hydroxyacyl-CoA = a (3E)-enoyl-CoA + H2O. It carries out the reaction a (3S)-3-hydroxyacyl-CoA + NAD(+) = a 3-oxoacyl-CoA + NADH + H(+). The catalysed reaction is (3S)-3-hydroxybutanoyl-CoA = (3R)-3-hydroxybutanoyl-CoA. The protein operates within lipid metabolism; fatty acid beta-oxidation. Functionally, catalyzes the formation of a hydroxyacyl-CoA by addition of water on enoyl-CoA. Also exhibits 3-hydroxyacyl-CoA epimerase and 3-hydroxyacyl-CoA dehydrogenase activities. This Vibrio parahaemolyticus serotype O3:K6 (strain RIMD 2210633) protein is Fatty acid oxidation complex subunit alpha.